The sequence spans 345 residues: Protoheme IX farnesyltransferase (345 aa).

The next 9 membrane-spanning stretches (helical) occupy residues 33–53, 54–74, 105–125, 126–146, 154–174, 182–202, 226–246, 247–267, and 315–335; these read VMSLVVFTALTGLLAARTPIH, PLLGAVAVLCIAIGAGASGAL, ATLGVVLSLLSVMLMGMAINW, LAAGLLAFTIVFYAVVYTMWL, IVIGGLAGALPPAIGWAAATG, LMVLIIFLWTPPHFWALSLYI, QILLYSLALIPVCLAPAFTGL, GGWLYLAVSGLGGLVFLTLAV, and ILYLFALFAALLAEAVLGLPI.

Belongs to the UbiA prenyltransferase family. Protoheme IX farnesyltransferase subfamily.

The protein resides in the cell inner membrane. The catalysed reaction is heme b + (2E,6E)-farnesyl diphosphate + H2O = Fe(II)-heme o + diphosphate. The protein operates within porphyrin-containing compound metabolism; heme O biosynthesis; heme O from protoheme: step 1/1. In terms of biological role, converts heme B (protoheme IX) to heme O by substitution of the vinyl group on carbon 2 of heme B porphyrin ring with a hydroxyethyl farnesyl side group. In Caulobacter sp. (strain K31), this protein is Protoheme IX farnesyltransferase.